The following is a 65-amino-acid chain: Weak neurotoxin 6 (65 aa).

5 disulfide bridges follow: cysteine 3-cysteine 24, cysteine 6-cysteine 11, cysteine 17-cysteine 42, cysteine 46-cysteine 57, and cysteine 58-cysteine 63.

This sequence belongs to the three-finger toxin family. Ancestral subfamily. Orphan group II sub-subfamily. As to expression, expressed by the venom gland.

It localises to the secreted. Functionally, binds with low affinity to muscular (alpha-1-beta-1-delta-epsilon/CHRNA1-CHRNB1-CHRND-CHRNE) and very low affinity to neuronal (alpha-7/CHRNA7) nicotinic acetylcholine receptor (nAChR). The protein is Weak neurotoxin 6 of Naja naja (Indian cobra).